The sequence spans 243 residues: Glucosamine-6-phosphate deaminase (243 aa).

The active-site Proton acceptor; for enolization step is Asp-67. The active-site For ring-opening step is the Asn-137. The active-site Proton acceptor; for ring-opening step is the His-139. Residue Glu-144 is the For ring-opening step of the active site.

Belongs to the glucosamine/galactosamine-6-phosphate isomerase family. NagB subfamily.

It carries out the reaction alpha-D-glucosamine 6-phosphate + H2O = beta-D-fructose 6-phosphate + NH4(+). It participates in amino-sugar metabolism; N-acetylneuraminate degradation; D-fructose 6-phosphate from N-acetylneuraminate: step 5/5. Catalyzes the reversible isomerization-deamination of glucosamine 6-phosphate (GlcN6P) to form fructose 6-phosphate (Fru6P) and ammonium ion. The chain is Glucosamine-6-phosphate deaminase from Staphylococcus epidermidis (strain ATCC 35984 / DSM 28319 / BCRC 17069 / CCUG 31568 / BM 3577 / RP62A).